We begin with the raw amino-acid sequence, 404 residues long: S-adenosylmethionine synthase (404 aa).

139–144 serves as a coordination point for ATP; sequence GKGSTD.

Belongs to the AdoMet synthase 2 family. Requires Mg(2+) as cofactor.

The enzyme catalyses L-methionine + ATP + H2O = S-adenosyl-L-methionine + phosphate + diphosphate. It participates in amino-acid biosynthesis; S-adenosyl-L-methionine biosynthesis; S-adenosyl-L-methionine from L-methionine: step 1/1. Its function is as follows. Catalyzes the formation of S-adenosylmethionine from methionine and ATP. The sequence is that of S-adenosylmethionine synthase from Saccharolobus islandicus (strain Y.N.15.51 / Yellowstone #2) (Sulfolobus islandicus).